Consider the following 196-residue polypeptide: Hypoxanthine/guanine phosphoribosyltransferase (196 aa).

It belongs to the purine/pyrimidine phosphoribosyltransferase family. Archaeal HPRT subfamily. Homodimer.

It localises to the cytoplasm. The enzyme catalyses IMP + diphosphate = hypoxanthine + 5-phospho-alpha-D-ribose 1-diphosphate. The catalysed reaction is GMP + diphosphate = guanine + 5-phospho-alpha-D-ribose 1-diphosphate. Its pathway is purine metabolism; IMP biosynthesis via salvage pathway; IMP from hypoxanthine: step 1/1. Catalyzes a salvage reaction resulting in the formation of IMP that is energically less costly than de novo synthesis. The protein is Hypoxanthine/guanine phosphoribosyltransferase of Methanocaldococcus sp. (strain FS406-22).